A 226-amino-acid chain; its full sequence is N-(5'-phosphoribosyl)anthranilate isomerase 2 (226 aa).

Belongs to the TrpF family.

It carries out the reaction N-(5-phospho-beta-D-ribosyl)anthranilate = 1-(2-carboxyphenylamino)-1-deoxy-D-ribulose 5-phosphate. It participates in amino-acid biosynthesis; L-tryptophan biosynthesis; L-tryptophan from chorismate: step 3/5. The protein is N-(5'-phosphoribosyl)anthranilate isomerase 2 (trpF2) of Methanosarcina mazei (strain ATCC BAA-159 / DSM 3647 / Goe1 / Go1 / JCM 11833 / OCM 88) (Methanosarcina frisia).